A 120-amino-acid chain; its full sequence is Ribonuclease P protein component (120 aa).

This sequence belongs to the RnpA family. As to quaternary structure, consists of a catalytic RNA component (M1 or rnpB) and a protein subunit.

The enzyme catalyses Endonucleolytic cleavage of RNA, removing 5'-extranucleotides from tRNA precursor.. Its function is as follows. RNaseP catalyzes the removal of the 5'-leader sequence from pre-tRNA to produce the mature 5'-terminus. It can also cleave other RNA substrates such as 4.5S RNA. The protein component plays an auxiliary but essential role in vivo by binding to the 5'-leader sequence and broadening the substrate specificity of the ribozyme. The polypeptide is Ribonuclease P protein component (Dehalococcoides mccartyi (strain ATCC BAA-2266 / KCTC 15142 / 195) (Dehalococcoides ethenogenes (strain 195))).